Reading from the N-terminus, the 177-residue chain is Large ribosomal subunit protein uL22 (177 aa).

Residues 118–177 (VESRPSREGRRGGAGESAGGARARRAQGSKAAAAKKAPASSSTKAATTTEASEEAKGGSQ) are disordered. The span at 121 to 130 (RPSREGRRGG) shows a compositional bias: basic and acidic residues. Positions 145 to 167 (GSKAAAAKKAPASSSTKAATTTE) are enriched in low complexity.

This sequence belongs to the universal ribosomal protein uL22 family. In terms of assembly, part of the 50S ribosomal subunit.

This protein binds specifically to 23S rRNA; its binding is stimulated by other ribosomal proteins, e.g. L4, L17, and L20. It is important during the early stages of 50S assembly. It makes multiple contacts with different domains of the 23S rRNA in the assembled 50S subunit and ribosome. Functionally, the globular domain of the protein is located near the polypeptide exit tunnel on the outside of the subunit, while an extended beta-hairpin is found that lines the wall of the exit tunnel in the center of the 70S ribosome. This is Large ribosomal subunit protein uL22 from Mycobacterium sp. (strain JLS).